Reading from the N-terminus, the 180-residue chain is Adenosine 5'-phosphosulfate reductase (180 aa).

The [4Fe-4S] cluster site is built by C57, C58, C140, and C143. C168 serves as the catalytic Nucleophile; cysteine thiosulfonate intermediate.

It belongs to the PAPS reductase family. CysH subfamily. [4Fe-4S] cluster is required as a cofactor.

It localises to the cytoplasm. It carries out the reaction [thioredoxin]-disulfide + sulfite + AMP + 2 H(+) = adenosine 5'-phosphosulfate + [thioredoxin]-dithiol. It participates in sulfur metabolism; hydrogen sulfide biosynthesis; sulfite from sulfate. Catalyzes the formation of sulfite from adenosine 5'-phosphosulfate (APS) using thioredoxin as an electron donor. The protein is Adenosine 5'-phosphosulfate reductase of Rhizobium tropici.